The following is a 145-amino-acid chain: Glutaconyl-CoA decarboxylase subunit gamma (145 aa).

A disordered region spans residues 52-82 (APAPAAAPAAAPAPAAKPAAAAPAGSVTVSA). Over residues 57-75 (AAPAAAPAPAAKPAAAAPA) the composition is skewed to low complexity. The region spanning 77–145 (SVTVSAPMPG…VATGDVMVIL (69 aa)) is the Biotinyl-binding domain. Lys-112 carries the post-translational modification N6-biotinyllysine.

Heterooctamer consisting of two alpha, two beta, two gamma and two delta subunits. Biotin serves as cofactor.

The enzyme catalyses (2E)-glutaconyl-CoA + Na(+)(in) + H(+) = (2E)-butenoyl-CoA + Na(+)(out) + CO2. It participates in amino-acid degradation; L-glutamate degradation via hydroxyglutarate pathway; crotonoyl-CoA from L-glutamate: step 5/5. Functionally, biotin carrier subunit of the primary sodium pump glutaconyl-CoA decarboxylase (GCD). This chain is Glutaconyl-CoA decarboxylase subunit gamma (gcdC), found in Acidaminococcus fermentans (strain ATCC 25085 / DSM 20731 / CCUG 9996 / CIP 106432 / VR4).